Reading from the N-terminus, the 109-residue chain is Encapsulin nanocompartment cargo protein EncD (109 aa).

Position 47 (glutamate 47) interacts with Fe cation. The disordered stretch occupies residues 61–94 (AGGRGAAAPTPAREAPAEAPRLARGSADELHEAA). Over residues 66–85 (AAAPTPAREAPAEAPRLARG) the composition is skewed to low complexity. The probable targeting peptide stretch occupies residues 100–106 (LTVGSLR).

It localises to the encapsulin nanocompartment. Its function is as follows. Cargo protein of a type 1 encapsulin nanocompartment. May help nucleate Fe atoms in the interior of the encapsulin nanocompartment. Present in about 47 copies/encapsulin nanocompartment. The polypeptide is Encapsulin nanocompartment cargo protein EncD (Myxococcus xanthus (strain DK1622)).